A 116-amino-acid polypeptide reads, in one-letter code: Large ribosomal subunit protein bL19 (116 aa).

Belongs to the bacterial ribosomal protein bL19 family.

Functionally, this protein is located at the 30S-50S ribosomal subunit interface and may play a role in the structure and function of the aminoacyl-tRNA binding site. The chain is Large ribosomal subunit protein bL19 from Clostridioides difficile (strain 630) (Peptoclostridium difficile).